A 274-amino-acid chain; its full sequence is Mitochondrial outer membrane protein porin 4 (274 aa).

Gly2 is subject to N-acetylglycine. Ser76 carries the phosphoserine modification.

The protein belongs to the eukaryotic mitochondrial porin (TC 1.B.8.1) family. As to expression, widely expressed.

It localises to the cell membrane. It is found in the mitochondrion outer membrane. Its function is as follows. Forms a channel through the mitochondrial outer membrane that allows diffusion of small hydrophilic molecules. The channel adopts an open conformation at low or zero membrane potential and a closed conformation at potentials above 30-40 mV. The open state has a weak anion selectivity whereas the closed state is cation-selective. Involved in plant growth and development at the vegetative and reproductive stages. Is important for leaf and pollen development and mitochondrial membrane potential steady state. May be involved in disease resistance. The protein is Mitochondrial outer membrane protein porin 4 (VDAC4) of Arabidopsis thaliana (Mouse-ear cress).